The chain runs to 448 residues: Acyl-lipid (9-3)-desaturase (448 aa).

A Cytochrome b5 heme-binding domain is found at 6–90 (KKYITSDELK…LKDYSVSEVS (85 aa)). Positions 41 and 64 each coordinate heme. The next 2 membrane-spanning stretches (helical) occupy residues 112-132 (IMFA…YGVL) and 137-157 (VLVH…SGWI). The Histidine box-1 signature appears at 159–163 (HDAGH). Residues 172 to 192 (LNKFMGIFAANCLSGISIGWW) traverse the membrane as a helical segment. The Histidine box-2 motif lies at 196–200 (HNAHH). The next 3 membrane-spanning stretches (helical) occupy residues 212–232 (LQYI…TSHF), 254–274 (FYPI…IMLL), and 286–306 (LLGC…LPNW). The Histidine box-3 signature appears at 373 to 377 (QIEHH).

This sequence belongs to the fatty acid desaturase type 1 family.

The protein resides in the endoplasmic reticulum membrane. The catalysed reaction is (9Z,12Z,15Z)-octadecatrienoyl-containing glycerolipid + 2 Fe(II)-[cytochrome b5] + O2 + 2 H(+) = (6Z,9Z,12Z,15Z)-octadecatetraenoyl-containing glycerolipid + 2 Fe(III)-[cytochrome b5] + 2 H2O. The enzyme catalyses a (9Z,12Z)-octadecadienoyl-containing glycerolipid + 2 Fe(II)-[cytochrome b5] + O2 + 2 H(+) = (6Z,9Z,12Z)-octadecatrienoyl-containing glycerolipid + 2 Fe(III)-[cytochrome b5] + 2 H2O. It participates in lipid metabolism; polyunsaturated fatty acid biosynthesis. In terms of biological role, fatty acid desaturase able to introduce a delta(6)-double bond into delta(9)-unsaturated fatty-acid substrates. Can use both linoleic acid (18:2(9Z,12Z)) and alpha-linolenic acid (18:3(9Z,12Z,15Z)) as substrates. This is Acyl-lipid (9-3)-desaturase from Borago officinalis (Bourrache).